Reading from the N-terminus, the 80-residue chain is Cytochrome c oxidase subunit 7B, mitochondrial (80 aa).

The transit peptide at M1–Q24 directs the protein to the mitochondrion. The Mitochondrial matrix portion of the chain corresponds to I25–D32. Residues F33 to Q59 traverse the membrane as a helical segment. The Mitochondrial intermembrane portion of the chain corresponds to I60–Q80.

It belongs to the cytochrome c oxidase VIIb family. As to quaternary structure, component of the cytochrome c oxidase (complex IV, CIV), a multisubunit enzyme composed of 14 subunits. The complex is composed of a catalytic core of 3 subunits MT-CO1, MT-CO2 and MT-CO3, encoded in the mitochondrial DNA, and 11 supernumerary subunits COX4I1 (or COX4I2), COX5A, COX5B, COX6A2 (or COX6A1), COX6B1 (or COX6B2), COX6C, COX7A1 (or COX7A2), COX7B, COX7C, COX8B and NDUFA4, which are encoded in the nuclear genome. The complex exists as a monomer or a dimer and forms supercomplexes (SCs) in the inner mitochondrial membrane with NADH-ubiquinone oxidoreductase (complex I, CI) and ubiquinol-cytochrome c oxidoreductase (cytochrome b-c1 complex, complex III, CIII), resulting in different assemblies (supercomplex SCI(1)III(2)IV(1) and megacomplex MCI(2)III(2)IV(2)).

It is found in the mitochondrion inner membrane. Its pathway is energy metabolism; oxidative phosphorylation. In terms of biological role, component of the cytochrome c oxidase, the last enzyme in the mitochondrial electron transport chain which drives oxidative phosphorylation. The respiratory chain contains 3 multisubunit complexes succinate dehydrogenase (complex II, CII), ubiquinol-cytochrome c oxidoreductase (cytochrome b-c1 complex, complex III, CIII) and cytochrome c oxidase (complex IV, CIV), that cooperate to transfer electrons derived from NADH and succinate to molecular oxygen, creating an electrochemical gradient over the inner membrane that drives transmembrane transport and the ATP synthase. Cytochrome c oxidase is the component of the respiratory chain that catalyzes the reduction of oxygen to water. Electrons originating from reduced cytochrome c in the intermembrane space (IMS) are transferred via the dinuclear copper A center (CU(A)) of subunit 2 and heme A of subunit 1 to the active site in subunit 1, a binuclear center (BNC) formed by heme A3 and copper B (CU(B)). The BNC reduces molecular oxygen to 2 water molecules using 4 electrons from cytochrome c in the IMS and 4 protons from the mitochondrial matrix. Plays a role in proper central nervous system (CNS) development in vertebrates. The chain is Cytochrome c oxidase subunit 7B, mitochondrial (COX7B) from Bos taurus (Bovine).